Here is a 474-residue protein sequence, read N- to C-terminus: Variant surface glycoprotein MITAT 1.5 (474 aa).

Residues 1-22 (MIHSNKVATVVLALISSWPADG) form the signal peptide. Cystine bridges form between cysteine 37–cysteine 161 and cysteine 144–cysteine 214. Residues asparagine 74 and asparagine 95 are each glycosylated (N-linked (GlcNAc...) asparagine). Asparagine 329 carries N-linked (GlcNAc...) asparagine glycosylation. The segment at 388 to 449 (AKDGEGQKNQ…ETDEPDKEKC (62 aa)) is disordered. Basic and acidic residues-rich tracts occupy residues 414–423 (TNKEACEKEN) and 435–449 (KGKD…KEKC). Asparagine 451 is lipidated: GPI-anchor amidated asparagine. Positions 452 to 474 (GSFLTSKQFAFSVVSAAFMALLF) are cleaved as a propeptide — removed in mature form.

The protein localises to the cell membrane. Functionally, VSG forms a coat on the surface of the parasite. The trypanosome evades the immune response of the host by expressing a series of antigenically distinct VSGs from an estimated 1000 VSG genes. The sequence is that of Variant surface glycoprotein MITAT 1.5 from Trypanosoma brucei brucei.